Reading from the N-terminus, the 213-residue chain is Uracil phosphoribosyltransferase (213 aa).

5-phospho-alpha-D-ribose 1-diphosphate-binding positions include Arg-78, Arg-103, and 130-138 (DPMLATGGS). Residues Ile-197 and 202–204 (GDA) each bind uracil. Position 203 (Asp-203) interacts with 5-phospho-alpha-D-ribose 1-diphosphate.

This sequence belongs to the UPRTase family. Mg(2+) is required as a cofactor.

It catalyses the reaction UMP + diphosphate = 5-phospho-alpha-D-ribose 1-diphosphate + uracil. The protein operates within pyrimidine metabolism; UMP biosynthesis via salvage pathway; UMP from uracil: step 1/1. With respect to regulation, allosterically activated by GTP. In terms of biological role, catalyzes the conversion of uracil and 5-phospho-alpha-D-ribose 1-diphosphate (PRPP) to UMP and diphosphate. This Cutibacterium acnes (strain DSM 16379 / KPA171202) (Propionibacterium acnes) protein is Uracil phosphoribosyltransferase.